Reading from the N-terminus, the 473-residue chain is Zinc finger and SCAN domain-containing protein 21 (473 aa).

A Glycyl lysine isopeptide (Lys-Gly) (interchain with G-Cter in SUMO2) cross-link involves residue lysine 27. An SCAN box domain is found at 45–127; the sequence is RQRFRQFGYH…TLLEDLEREL (83 aa). The tract at residues 127–171 is disordered; sequence LDEPGHQVSTPPNEQKPVWEKISSSGTAKESPSSMQPQPLETSHN. A compositionally biased stretch (polar residues) spans 148 to 171; it reads ISSSGTAKESPSSMQPQPLETSHN. Glycyl lysine isopeptide (Lys-Gly) (interchain with G-Cter in SUMO2) cross-links involve residues lysine 221 and lysine 232. Residues 244-272 are disordered; that stretch reads LENEKGTKPPLQEAGSKKGRESVPTKPTP. The span at 258–272 shows a compositional bias: basic and acidic residues; sequence GSKKGRESVPTKPTP. 7 consecutive C2H2-type zinc fingers follow at residues 277–299, 305–327, 333–354, 360–382, 388–410, 416–438, and 444–466; these read YICA…RRTH, YVCT…YRTH, YDCK…QRMH, YQCK…YRIH, YQCN…QRLH, YKCK…HRIH, and YWCH…QRVH. Residue lysine 349 forms a Glycyl lysine isopeptide (Lys-Gly) (interchain with G-Cter in SUMO2) linkage.

This sequence belongs to the krueppel C2H2-type zinc-finger protein family.

The protein resides in the nucleus. Its function is as follows. Strong transcriptional activator. Plays an important role in spermatogenesis; essential for the progression of meiotic prophase I in spermatocytes. The chain is Zinc finger and SCAN domain-containing protein 21 (ZSCAN21) from Gorilla gorilla gorilla (Western lowland gorilla).